A 254-amino-acid polypeptide reads, in one-letter code: Pyruvate aldolase (254 aa).

Catalysis depends on H48, which acts as the Proton acceptor. 2 residues coordinate a divalent metal cation: E151 and D177.

Belongs to the HpcH/HpaI aldolase family. Requires a divalent metal cation as cofactor.

The catalysed reaction is D-glyceraldehyde + pyruvate = 2-dehydro-3-deoxy-L-galactonate. Functionally, aldolase which can catalyze in vitro the aldolisation reaction between pyruvate (PA) and D-glyceraldehyde (D-GA) to form 2-dehydro-3-deoxy-L-galactonate. The protein is Pyruvate aldolase of Rhizobium etli (strain ATCC 51251 / DSM 11541 / JCM 21823 / NBRC 15573 / CFN 42).